Here is a 163-residue protein sequence, read N- to C-terminus: MEAGSWAPRRWPRPPGIVLLALASVLSSLLSSGQARVYSRCELARVLQDFGLEGYRGYSLADWICLAYFASGFNTGAVDHEADGSTNSGIFQINSRKWCKNLNPNVPNLCQMYCSDLLNPNLKDTVICAMKITQEPQGLGSWEAWRHHCQGKDLSDWVDGCEL.

The first 35 residues, 1-35 (MEAGSWAPRRWPRPPGIVLLALASVLSSLLSSGQA), serve as a signal peptide directing secretion. The 128-residue stretch at 36-163 (RVYSRCELAR…LSDWVDGCEL (128 aa)) folds into the C-type lysozyme domain. Cystine bridges form between Cys-41–Cys-161, Cys-65–Cys-149, Cys-99–Cys-114, and Cys-110–Cys-128.

It belongs to the glycosyl hydrolase 22 family. In terms of assembly, interacts with ASTL.

The protein resides in the secreted. Its function is as follows. Sperm surface membrane protein that may be involved in sperm-egg plasma membrane adhesion and fusion during fertilization. It could be a potential receptor for the egg oligosaccharide residue N-acetylglucosamine, which is present in the extracellular matrix over the egg plasma membrane. The processed form has no detectable bacteriolytic activity in vitro. This chain is Sperm acrosome membrane-associated protein 3 (SPACA3), found in Bos taurus (Bovine).